Reading from the N-terminus, the 443-residue chain is Thymidine phosphorylase (443 aa).

Belongs to the thymidine/pyrimidine-nucleoside phosphorylase family. In terms of assembly, homodimer.

It catalyses the reaction thymidine + phosphate = 2-deoxy-alpha-D-ribose 1-phosphate + thymine. Its pathway is pyrimidine metabolism; dTMP biosynthesis via salvage pathway; dTMP from thymine: step 1/2. Functionally, the enzymes which catalyze the reversible phosphorolysis of pyrimidine nucleosides are involved in the degradation of these compounds and in their utilization as carbon and energy sources, or in the rescue of pyrimidine bases for nucleotide synthesis. The chain is Thymidine phosphorylase from Shewanella pealeana (strain ATCC 700345 / ANG-SQ1).